Reading from the N-terminus, the 271-residue chain is uncharacterized protein (271 aa).

Disordered regions lie at residues 50-93 (KKKT…SSSL) and 128-233 (KNNY…RKKV). Composition is skewed to low complexity over residues 61–93 (SPTK…SSSL) and 129–165 (NNYN…NNNN). The segment covering 169-179 (TDKKEGEKNEN) has biased composition (basic and acidic residues). Acidic residues-rich tracts occupy residues 180–199 (ENEN…DIIE) and 207–217 (MDEELENEQVE).

This is an uncharacterized protein from Dictyostelium discoideum (Social amoeba).